A 252-amino-acid polypeptide reads, in one-letter code: 5'-nucleotidase SurE (252 aa).

The a divalent metal cation site is built by D8, D9, S39, and N95.

This sequence belongs to the SurE nucleotidase family. Requires a divalent metal cation as cofactor.

Its subcellular location is the cytoplasm. The enzyme catalyses a ribonucleoside 5'-phosphate + H2O = a ribonucleoside + phosphate. Functionally, nucleotidase that shows phosphatase activity on nucleoside 5'-monophosphates. This chain is 5'-nucleotidase SurE, found in Clostridium botulinum (strain Kyoto / Type A2).